The chain runs to 472 residues: Acetyl-CoA decarbonylase/synthase complex subunit beta 2 (472 aa).

[Ni-Fe-S] cluster contacts are provided by cysteine 189, cysteine 192, cysteine 278, and cysteine 280.

Belongs to the CdhC family. In terms of assembly, monomer. The ACDS complex is made up of alpha, epsilon, beta, gamma and delta chains with a probable stoichiometry of (alpha(2)epsilon(2))(4)-beta(8)-(gamma(1)delta(1))(8) (Potential). The cofactor is [Ni-Fe-S] cluster.

It carries out the reaction Co(I)-[corrinoid Fe-S protein] + acetyl-CoA + H(+) = methyl-Co(III)-[corrinoid Fe-S protein] + CO + CoA. It participates in one-carbon metabolism; methanogenesis from acetate. Functionally, part of a complex that catalyzes the reversible cleavage of acetyl-CoA, allowing growth on acetate as sole source of carbon and energy. The alpha-epsilon complex generates CO from CO(2), while the beta subunit (this protein) combines the CO with CoA and a methyl group to form acetyl-CoA. The methyl group, which is incorporated into acetyl-CoA, is transferred to the beta subunit by a corrinoid iron-sulfur protein (the gamma-delta complex). In Methanosarcina thermophila, this protein is Acetyl-CoA decarbonylase/synthase complex subunit beta 2 (cdhC2).